The following is a 258-amino-acid chain: Flagellin B3 (258 aa).

Residues 1 to 8 constitute a propeptide that is removed on maturation; that stretch reads MRFLKKRG.

It belongs to the archaeal flagellin family.

The protein resides in the archaeal flagellum. Functionally, flagellin is the subunit protein which polymerizes to form the filaments of archaeal flagella. In Thermococcus kodakarensis (strain ATCC BAA-918 / JCM 12380 / KOD1) (Pyrococcus kodakaraensis (strain KOD1)), this protein is Flagellin B3 (flaB3).